The primary structure comprises 366 residues: Alanine racemase (366 aa).

Lys40 (proton acceptor; specific for D-alanine) is an active-site residue. An N6-(pyridoxal phosphate)lysine modification is found at Lys40. Arg136 is a binding site for substrate. Tyr263 (proton acceptor; specific for L-alanine) is an active-site residue. Position 310 (Met310) interacts with substrate.

It belongs to the alanine racemase family. Pyridoxal 5'-phosphate serves as cofactor.

The enzyme catalyses L-alanine = D-alanine. The protein operates within amino-acid biosynthesis; D-alanine biosynthesis; D-alanine from L-alanine: step 1/1. Catalyzes the interconversion of L-alanine and D-alanine. May also act on other amino acids. This is Alanine racemase (alr) from Streptococcus pyogenes serotype M12 (strain MGAS2096).